A 166-amino-acid chain; its full sequence is Phospholipase A2 inhibitor A4/A5 (166 aa).

The first 19 residues, methionine 1 to glycine 19, serve as a signal peptide directing secretion. In terms of domain architecture, C-type lectin spans leucine 46–glutamate 161. 2 disulfide bridges follow: cysteine 83–cysteine 160 and cysteine 138–cysteine 152. The N-linked (GlcNAc...) asparagine glycan is linked to asparagine 122.

This sequence belongs to the alpha-type phospholipase A2 inhibitor family. As to quaternary structure, homotrimer; non-covalently linked. Expressed by the liver.

The protein localises to the secreted. In terms of biological role, this phospholipase A2 inhibitor binds directly phospholipase A2 in the presence or absence of calcium. This is Phospholipase A2 inhibitor A4/A5 from Crotalus durissus terrificus (South American rattlesnake).